The sequence spans 255 residues: Geranylgeranylglyceryl phosphate synthase (255 aa).

The Mg(2+) site is built by Asp25 and Ser54. Residues 173–179 (YLEGGSG), 203–204 (GG), and 225–226 (GT) contribute to the sn-glycerol 1-phosphate site.

This sequence belongs to the GGGP/HepGP synthase family. Group II subfamily. The cofactor is Mg(2+).

The protein resides in the cytoplasm. It catalyses the reaction sn-glycerol 1-phosphate + (2E,6E,10E)-geranylgeranyl diphosphate = sn-3-O-(geranylgeranyl)glycerol 1-phosphate + diphosphate. Its pathway is membrane lipid metabolism; glycerophospholipid metabolism. Functionally, prenyltransferase that catalyzes the transfer of the geranylgeranyl moiety of geranylgeranyl diphosphate (GGPP) to the C3 hydroxyl of sn-glycerol-1-phosphate (G1P). This reaction is the first ether-bond-formation step in the biosynthesis of archaeal membrane lipids. In Thermofilum pendens (strain DSM 2475 / Hrk 5), this protein is Geranylgeranylglyceryl phosphate synthase.